Here is a 351-residue protein sequence, read N- to C-terminus: Nicotinate-nucleotide--dimethylbenzimidazole phosphoribosyltransferase (351 aa).

Glu-319 acts as the Proton acceptor in catalysis.

It belongs to the CobT family.

The enzyme catalyses 5,6-dimethylbenzimidazole + nicotinate beta-D-ribonucleotide = alpha-ribazole 5'-phosphate + nicotinate + H(+). Its pathway is nucleoside biosynthesis; alpha-ribazole biosynthesis; alpha-ribazole from 5,6-dimethylbenzimidazole: step 1/2. Catalyzes the synthesis of alpha-ribazole-5'-phosphate from nicotinate mononucleotide (NAMN) and 5,6-dimethylbenzimidazole (DMB). This Desulforamulus reducens (strain ATCC BAA-1160 / DSM 100696 / MI-1) (Desulfotomaculum reducens) protein is Nicotinate-nucleotide--dimethylbenzimidazole phosphoribosyltransferase.